A 707-amino-acid polypeptide reads, in one-letter code: Lipase maturation factor 2 (707 aa).

10 consecutive transmembrane segments (helical) span residues 10–30 (AFLW…YVQI), 78–98 (MELI…FSCL), 102–122 (LVFL…QVFL), 126–146 (WDSL…LHAM), 158–178 (GVTF…SGVV), 220–240 (FSVV…FLPF), 256–276 (ILII…VLCC), 309–329 (LVSL…VKYF), 358–378 (ITFP…LKGM), and 395–415 (LQWL…LVPY). The N-linked (GlcNAc...) asparagine glycan is linked to asparagine 483. Residues 634 to 654 (LLLHSFIFGIFTIYFLQAMFG) form a helical membrane-spanning segment. The disordered stretch occupies residues 661–707 (VAKQRHSMPPNEKKKQKPNSGQGESASSKSSGHGTDTVRRNKKNEKS). A compositionally biased stretch (low complexity) spans 680 to 694 (SGQGESASSKSSGHG). The span at 696–707 (DTVRRNKKNEKS) shows a compositional bias: basic and acidic residues.

This sequence belongs to the lipase maturation factor family.

The protein resides in the endoplasmic reticulum membrane. In terms of biological role, involved in the maturation of specific proteins in the endoplasmic reticulum. This Xenopus laevis (African clawed frog) protein is Lipase maturation factor 2 (lmf2).